The chain runs to 106 residues: Small ribosomal subunit protein uS17 (106 aa).

Belongs to the universal ribosomal protein uS17 family. Part of the 30S ribosomal subunit.

One of the primary rRNA binding proteins, it binds specifically to the 5'-end of 16S ribosomal RNA. The chain is Small ribosomal subunit protein uS17 from Picrophilus torridus (strain ATCC 700027 / DSM 9790 / JCM 10055 / NBRC 100828 / KAW 2/3).